A 304-amino-acid polypeptide reads, in one-letter code: UDP-N-acetylenolpyruvoylglucosamine reductase (304 aa).

Positions methionine 33–lysine 212 constitute an FAD-binding PCMH-type domain. Arginine 176 is an active-site residue. Serine 226 serves as the catalytic Proton donor. The active site involves glutamate 296.

The protein belongs to the MurB family. FAD is required as a cofactor.

The protein localises to the cytoplasm. It catalyses the reaction UDP-N-acetyl-alpha-D-muramate + NADP(+) = UDP-N-acetyl-3-O-(1-carboxyvinyl)-alpha-D-glucosamine + NADPH + H(+). It functions in the pathway cell wall biogenesis; peptidoglycan biosynthesis. Cell wall formation. This chain is UDP-N-acetylenolpyruvoylglucosamine reductase, found in Exiguobacterium sibiricum (strain DSM 17290 / CCUG 55495 / CIP 109462 / JCM 13490 / 255-15).